The sequence spans 248 residues: Pyridoxine 5'-phosphate synthase (248 aa).

3-amino-2-oxopropyl phosphate is bound at residue N12. 14–15 is a binding site for 1-deoxy-D-xylulose 5-phosphate; sequence DH. R23 is a binding site for 3-amino-2-oxopropyl phosphate. The Proton acceptor role is filled by H48. The 1-deoxy-D-xylulose 5-phosphate site is built by R50 and H55. E75 (proton acceptor) is an active-site residue. Residue T105 coordinates 1-deoxy-D-xylulose 5-phosphate. The active-site Proton donor is H196. 3-amino-2-oxopropyl phosphate contacts are provided by residues G197 and 218-219; that span reads GH.

Belongs to the PNP synthase family. As to quaternary structure, homooctamer; tetramer of dimers.

The protein resides in the cytoplasm. It carries out the reaction 3-amino-2-oxopropyl phosphate + 1-deoxy-D-xylulose 5-phosphate = pyridoxine 5'-phosphate + phosphate + 2 H2O + H(+). Its pathway is cofactor biosynthesis; pyridoxine 5'-phosphate biosynthesis; pyridoxine 5'-phosphate from D-erythrose 4-phosphate: step 5/5. In terms of biological role, catalyzes the complicated ring closure reaction between the two acyclic compounds 1-deoxy-D-xylulose-5-phosphate (DXP) and 3-amino-2-oxopropyl phosphate (1-amino-acetone-3-phosphate or AAP) to form pyridoxine 5'-phosphate (PNP) and inorganic phosphate. This is Pyridoxine 5'-phosphate synthase from Azotobacter vinelandii (strain DJ / ATCC BAA-1303).